A 185-amino-acid chain; its full sequence is MGQQVLKSSNEKMEKAVAAYSRELATVRAGRASSSVLDKVQVDYYGAPTPVVQLANITVPEARLLVIQPYDKTSIGDIEKAILKADLGLNPSNDGTVIRIAFPALTEERRRDLVKVVKKYAEEAKVAVRNVRRDSNDDLKKLEKAGDITEDDLRGYTEDIQKETDKYIAKVDEIAKNKEKEIMEV.

Belongs to the RRF family.

Its subcellular location is the cytoplasm. In terms of biological role, responsible for the release of ribosomes from messenger RNA at the termination of protein biosynthesis. May increase the efficiency of translation by recycling ribosomes from one round of translation to another. The chain is Ribosome-recycling factor from Bacillus mycoides (strain KBAB4) (Bacillus weihenstephanensis).